The sequence spans 191 residues: Glutathione-dependent formaldehyde-activating enzyme (191 aa).

Residues 22–169 (FAGGTLQCLC…LTELGLTPYD (148 aa)) enclose the CENP-V/GFA domain. Zn(2+) is bound by residues C29, C31, C50, C52, C55, C97, and C100.

It belongs to the Gfa family. Zn(2+) serves as cofactor.

It catalyses the reaction S-(hydroxymethyl)glutathione = glutathione + formaldehyde. It functions in the pathway one-carbon metabolism; formaldehyde degradation; formate from formaldehyde (glutathione route): step 1/3. In terms of biological role, catalyzes the condensation of formaldehyde and glutathione to S-hydroxymethylglutathione. This is Glutathione-dependent formaldehyde-activating enzyme from Xanthomonas campestris pv. campestris (strain B100).